The chain runs to 143 residues: Hypoxic response protein 1 (143 aa).

CBS domains lie at Met-8 to Pro-65 and Leu-73 to Phe-131. A disulfide bridge links Cys-14 with Cys-39. Zn(2+)-binding residues include His-97 and His-122.

Homodimer.

Its subcellular location is the secreted. Functionally, unlike some other CBS-domain containing proteins does not seem to bind AMP. The polypeptide is Hypoxic response protein 1 (hrp1) (Mycobacterium tuberculosis (strain CDC 1551 / Oshkosh)).